The chain runs to 82 residues: MKTYAVLLALVVAFVCIAESTGYPVEDLEDDELTELEAEALLEDLLEDLELEDLDYNEEARSWKSMAKKLKEYMEKLKQRAG.

Residues 1 to 22 (MKTYAVLLALVVAFVCIAESTG) form the signal peptide. Positions 23–61 (YPVEDLEDDELTELEAEALLEDLLEDLELEDLDYNEEAR) are excised as a propeptide. Residues 58–61 (EEAR) carry the Processing quadruplet motif motif. Alanine 81 carries the post-translational modification Alanine amide.

Belongs to the cationic peptide 03 (latarcin) family. 03 subfamily. Cleavage of the propeptide depends on the processing quadruplet motif (XXXR, with at least one of X being E). In terms of tissue distribution, expressed by the venom gland.

The protein localises to the secreted. The protein resides in the target cell membrane. Its function is as follows. It has antimicrobial activity against Gram-positive bacteria (A.globiformis VKM Ac-1112 (MIC=0.3 uM), and B.subtilis VKM B-501 (MIC=1.2 uM)), Gram-negative bacteria (E.coli DH5-alpha (MIC=2.5 uM), E.coli MH1 (MIC=6.0 uM), and P.aeruginosa PAO1 (MIC&gt;40 uM)), and yeasts (P.pastoris GS115 (MIC=20 uM), and S.cerevisiae Y190 (MIC=20 uM)). Causes paralysis, but is not lethal when injected into insect (M.domestica) larvae. A second study reports antibacterial activity against E.coli (MIC=100 uM) and S.aureus (MIC=84 uM). Furthermore, increases efficacy of antibiotics (chloramphenicol, streptomycin, kanamycin, novobiocin) when tested against E.coli, probably by facilitating their incorporation into the bacteria. The sequence is that of M-zodatoxin-Lt3a from Lachesana tarabaevi (Spider).